Here is a 1340-residue protein sequence, read N- to C-terminus: Serine/threonine-protein phosphatase 7 long form homolog (1340 aa).

Positions 660 and 662 each coordinate Mn(2+). His722 functions as the Proton donor in the catalytic mechanism. His773 is a Mn(2+) binding site. Disordered regions lie at residues Gln788–Glu814, Lys1012–Arg1093, Thr1196–Ile1218, and Phe1266–Ser1340. Over residues Arg790–Lys799 the composition is skewed to basic residues. Residues Glu1018–Asp1027 are compositionally biased toward acidic residues. The span at Gly1049–Ser1080 shows a compositional bias: basic and acidic residues. Polar residues predominate over residues Glu1203–Glu1213. Composition is skewed to basic and acidic residues over residues Phe1266–Ile1289 and Asp1318–Leu1328.

It belongs to the PPP phosphatase family. PP-7 subfamily. Mn(2+) is required as a cofactor. Expressed in root tips, the shoot apical meristem (SAM), leaf vasculature, hydathodes and mature flowers.

It is found in the nucleus. It carries out the reaction O-phospho-L-seryl-[protein] + H2O = L-seryl-[protein] + phosphate. The enzyme catalyses O-phospho-L-threonyl-[protein] + H2O = L-threonyl-[protein] + phosphate. Maybe required to maintain cell division activity in meristematic cells. The sequence is that of Serine/threonine-protein phosphatase 7 long form homolog from Arabidopsis thaliana (Mouse-ear cress).